Reading from the N-terminus, the 43-residue chain is Antimicrobial protein PcfHb (43 aa).

As to quaternary structure, possible monomer. As to expression, expressed in mucus-secreting tissues.

It localises to the secreted. Functionally, shows antimicrobial activity against M.luteus (MIC=4 uM) and E.coli (MIC=12 uM), as well as against the yeast C.tropicalis (MIC=4 uM). Shows a pro-inflammatory effect, since the topical application of the protein induces an increase of cellular recruitment characterized by an increase in the number of leukocyte rolling. Does not show hemolytic activity on human erythrocytes (at doses up to 100 uM). The protein is Antimicrobial protein PcfHb of Potamotrygon cf. henlei (Freshwater stingray).